The following is a 349-amino-acid chain: Phenylalanine--tRNA ligase alpha subunit (349 aa).

Residue Glu259 coordinates Mg(2+).

It belongs to the class-II aminoacyl-tRNA synthetase family. Phe-tRNA synthetase alpha subunit type 1 subfamily. As to quaternary structure, tetramer of two alpha and two beta subunits. Mg(2+) serves as cofactor.

The protein resides in the cytoplasm. The enzyme catalyses tRNA(Phe) + L-phenylalanine + ATP = L-phenylalanyl-tRNA(Phe) + AMP + diphosphate + H(+). The polypeptide is Phenylalanine--tRNA ligase alpha subunit (Lactobacillus helveticus (strain DPC 4571)).